Consider the following 109-residue polypeptide: V-type proton ATPase 16 kDa proteolipid subunit (109 aa).

A helical transmembrane segment spans residues 1–20 (VPVVMAGVLGIYGLIIAVII). Residues 21-39 (STGINPKAKPYYLFDGYAH) lie on the Lumenal side of the membrane. The helical transmembrane segment at 40-61 (LSSGLACGLAGLAAGMAIGIVG) threads the bilayer. Residues 62–73 (DAGVRANAQQPK) are Cytoplasmic-facing. The chain crosses the membrane as a helical span at residues 74–99 (LFVGMILILIFAEALALYGLIVGIIL). The Lumenal portion of the chain corresponds to 100–109 (SSRAGQSRAD).

This sequence belongs to the V-ATPase proteolipid subunit family. V-ATPase is a heteromultimeric enzyme composed of a peripheral catalytic V1 complex (main components: subunits A, B, C, D, E, and F) attached to an integral membrane V0 proton pore complex (main component: the proteolipid protein; which is present as a hexamer that forms the proton-conducting pore). High expression in the mesocotyl tip of etiolated seedlings compared to the base.

The protein resides in the vacuole membrane. Functionally, proton-conducting pore forming subunit of the membrane integral V0 complex of vacuolar ATPase. V-ATPase is responsible for acidifying a variety of intracellular compartments in eukaryotic cells. In Zea mays (Maize), this protein is V-type proton ATPase 16 kDa proteolipid subunit.